The chain runs to 164 residues: UPF0114 protein YqhA (164 aa).

The next 3 helical transmembrane spans lie at 10–32, 53–75, and 136–155; these read YASR…ALAL, LILV…MVMF, and LMWY…VMGY.

The protein belongs to the UPF0114 family.

It localises to the cell membrane. The polypeptide is UPF0114 protein YqhA (Salmonella typhi).